The primary structure comprises 242 residues: Lactate utilization protein A 2 (242 aa).

It belongs to the LutA/YkgE family.

Is involved in L-lactate degradation and allows cells to grow with lactate as the sole carbon source. The chain is Lactate utilization protein A 2 from Bacillus cereus (strain AH820).